We begin with the raw amino-acid sequence, 66 residues long: Stress-induced protein KIN1 (66 aa).

The segment covering 1–13 (MSETNKNAFQAGQ) has biased composition (polar residues). Residues 1 to 52 (MSETNKNAFQAGQTAGKAEEKSNVLLDKAKDAAAGAGAGAQQAGKSVSDAAA) are disordered. The segment covering 17 to 31 (KAEEKSNVLLDKAKD) has biased composition (basic and acidic residues). 2 consecutive repeats follow at residues 31–35 (DAAAG) and 49–53 (DAAAG). The span at 32 to 45 (AAAGAGAGAQQAGK) shows a compositional bias: low complexity.

This chain is Stress-induced protein KIN1 (KIN1), found in Arabidopsis thaliana (Mouse-ear cress).